The chain runs to 511 residues: MASDSSFPGASSNVAEYSVSEISGALKRTVEDTFGHVRVRGEISGYRGPHSSGHAYFALKDDRARLEAVIWRGSMSRLRFRPEEGMEVIATGKLTTYPGSSKYQIVIEQMEPAGAGALMALLEERKQRLAAEGLFDPALKQLLPFMPRVIGVVTSPTGAVIRDIIHRISDRYPLRVIVWPVRVQGDTCGPEVATAVNGFNTLPDDGPILRPDVLIVARGGGSLEDLWGFNDEIVVRAVAASHIPVISAVGHETDWTLIDLAADMRAPTPTGAAEMAVPVKADLQASLASQSARLSSAMSRFFDQKRQAHRAAARAMPSADQLLALPRRRFDEAASRLTRALFVNTQKKRVHFDGHARQLSPRLLQRRLVELERGVTMLGQRLPRALEAFLRERRTAFTHRANRLSPEPILRRTRLTGSTLEQLDRRRDQAVRLLIERVKRRSQELDRLMRTLSYESVLERGFAVVFDAQGKPVKQAAAVSPGDALSVRFRDGDVGVVARAGLTIPDPTKGQ.

The protein belongs to the XseA family. In terms of assembly, heterooligomer composed of large and small subunits.

It is found in the cytoplasm. It carries out the reaction Exonucleolytic cleavage in either 5'- to 3'- or 3'- to 5'-direction to yield nucleoside 5'-phosphates.. In terms of biological role, bidirectionally degrades single-stranded DNA into large acid-insoluble oligonucleotides, which are then degraded further into small acid-soluble oligonucleotides. This is Exodeoxyribonuclease 7 large subunit from Brucella suis (strain ATCC 23445 / NCTC 10510).